The chain runs to 310 residues: tRNA dimethylallyltransferase (310 aa).

An ATP-binding site is contributed by 9–16 (GPTAVGKT). 11–16 (TAVGKT) is a substrate binding site. The interaction with substrate tRNA stretch occupies residues 34 to 37 (DSMQ).

It belongs to the IPP transferase family. As to quaternary structure, monomer. The cofactor is Mg(2+).

The enzyme catalyses adenosine(37) in tRNA + dimethylallyl diphosphate = N(6)-dimethylallyladenosine(37) in tRNA + diphosphate. In terms of biological role, catalyzes the transfer of a dimethylallyl group onto the adenine at position 37 in tRNAs that read codons beginning with uridine, leading to the formation of N6-(dimethylallyl)adenosine (i(6)A). This is tRNA dimethylallyltransferase from Syntrophomonas wolfei subsp. wolfei (strain DSM 2245B / Goettingen).